The chain runs to 296 residues: tRNA uridine(34) hydroxylase (296 aa).

The Rhodanese domain occupies 132–226 (AGRPVVMLDT…YFEEVGGAHY (95 aa)). Cys186 functions as the Cysteine persulfide intermediate in the catalytic mechanism.

Belongs to the TrhO family.

It catalyses the reaction uridine(34) in tRNA + AH2 + O2 = 5-hydroxyuridine(34) in tRNA + A + H2O. Functionally, catalyzes oxygen-dependent 5-hydroxyuridine (ho5U) modification at position 34 in tRNAs. This is tRNA uridine(34) hydroxylase from Burkholderia thailandensis (strain ATCC 700388 / DSM 13276 / CCUG 48851 / CIP 106301 / E264).